Here is a 396-residue protein sequence, read N- to C-terminus: Elongation factor Tu 2 (396 aa).

In terms of domain architecture, tr-type G spans Lys10–Asp206. The tract at residues Gly19–Thr26 is G1. Gly19–Thr26 lines the GTP pocket. Residue Thr26 coordinates Mg(2+). The interval Gly60–Asn64 is G2. The interval Asp81 to Gly84 is G3. Residues Asp81–His85 and Asn136–Asp139 contribute to the GTP site. Residues Asn136–Asp139 are G4. Positions Ser174–Lys176 are G5.

Belongs to the TRAFAC class translation factor GTPase superfamily. Classic translation factor GTPase family. EF-Tu/EF-1A subfamily. As to quaternary structure, monomer.

Its subcellular location is the cytoplasm. The enzyme catalyses GTP + H2O = GDP + phosphate + H(+). Its function is as follows. GTP hydrolase that promotes the GTP-dependent binding of aminoacyl-tRNA to the A-site of ribosomes during protein biosynthesis. The chain is Elongation factor Tu 2 from Caulobacter sp. (strain K31).